The primary structure comprises 75 residues: DNA-directed RNA polymerase subunit Rpo6 (75 aa).

The protein belongs to the archaeal Rpo6/eukaryotic RPB6 RNA polymerase subunit family. As to quaternary structure, part of the RNA polymerase complex.

It is found in the cytoplasm. It catalyses the reaction RNA(n) + a ribonucleoside 5'-triphosphate = RNA(n+1) + diphosphate. Its function is as follows. DNA-dependent RNA polymerase (RNAP) catalyzes the transcription of DNA into RNA using the four ribonucleoside triphosphates as substrates. This chain is DNA-directed RNA polymerase subunit Rpo6, found in Archaeoglobus fulgidus (strain ATCC 49558 / DSM 4304 / JCM 9628 / NBRC 100126 / VC-16).